The primary structure comprises 379 residues: Wnt inhibitory factor 1 (379 aa).

The signal sequence occupies residues 1–28 (MARRSAFPAAALWLWSILLCLLALRAEA). Residues 38 to 177 (LWIDAHQARV…PQNAIFFKTC (140 aa)) enclose the WIF domain. An N-linked (GlcNAc...) asparagine glycan is attached at Asn-88. Intrachain disulfides connect Cys-140-Cys-177, Cys-182-Cys-192, Cys-186-Cys-198, Cys-200-Cys-209, Cys-214-Cys-224, Cys-218-Cys-230, and Cys-232-Cys-241. 5 EGF-like domains span residues 178 to 210 (QQAE…PHCE), 211 to 242 (KALC…VNCD), 243 to 271 (KANC…LEGE), 274 to 306 (EISK…DLCS), and 307 to 338 (KPVC…RHCN). Asn-245 carries N-linked (GlcNAc...) asparagine glycosylation. 8 cysteine pairs are disulfide-bonded: Cys-246-Cys-256, Cys-250-Cys-262, Cys-278-Cys-288, Cys-282-Cys-294, Cys-296-Cys-305, Cys-310-Cys-320, Cys-314-Cys-326, and Cys-328-Cys-337. Residues 354-379 (AQLRQHTPSLKKAEERRDPPESNYIW) are disordered. Residues 364–373 (KKAEERRDPP) are compositionally biased toward basic and acidic residues.

In terms of assembly, interacts with MYOC.

The protein localises to the secreted. Binds to WNT proteins and inhibits their activities. May be involved in mesoderm segmentation. This chain is Wnt inhibitory factor 1 (WIF1), found in Homo sapiens (Human).